A 226-amino-acid chain; its full sequence is Acyl-protein thioesterase 1 homolog 1 (226 aa).

Catalysis depends on charge relay system residues serine 121, aspartate 174, and histidine 206.

This sequence belongs to the AB hydrolase superfamily. AB hydrolase 2 family.

It localises to the cytoplasm. Its subcellular location is the nucleus. It catalyses the reaction S-hexadecanoyl-L-cysteinyl-[protein] + H2O = L-cysteinyl-[protein] + hexadecanoate + H(+). Hydrolyzes fatty acids from S-acylated cysteine residues in proteins with a strong preference for palmitoylated G-alpha proteins over other acyl substrates. Mediates the deacylation of G-alpha proteins such as GPA1 in vivo, but has weak or no activity toward palmitoylated Ras proteins. Has weak lysophospholipase activity in vitro; however such activity may not exist in vivo. The protein is Acyl-protein thioesterase 1 homolog 1 of Dictyostelium discoideum (Social amoeba).